The primary structure comprises 160 residues: Crossover junction endodeoxyribonuclease RuvC (160 aa).

Active-site residues include D7, E73, and D145. 3 residues coordinate Mg(2+): D7, E73, and D145.

Belongs to the RuvC family. Homodimer which binds Holliday junction (HJ) DNA. The HJ becomes 2-fold symmetrical on binding to RuvC with unstacked arms; it has a different conformation from HJ DNA in complex with RuvA. In the full resolvosome a probable DNA-RuvA(4)-RuvB(12)-RuvC(2) complex forms which resolves the HJ. The cofactor is Mg(2+).

It is found in the cytoplasm. The enzyme catalyses Endonucleolytic cleavage at a junction such as a reciprocal single-stranded crossover between two homologous DNA duplexes (Holliday junction).. In terms of biological role, the RuvA-RuvB-RuvC complex processes Holliday junction (HJ) DNA during genetic recombination and DNA repair. Endonuclease that resolves HJ intermediates. Cleaves cruciform DNA by making single-stranded nicks across the HJ at symmetrical positions within the homologous arms, yielding a 5'-phosphate and a 3'-hydroxyl group; requires a central core of homology in the junction. The consensus cleavage sequence is 5'-(A/T)TT(C/G)-3'. Cleavage occurs on the 3'-side of the TT dinucleotide at the point of strand exchange. HJ branch migration catalyzed by RuvA-RuvB allows RuvC to scan DNA until it finds its consensus sequence, where it cleaves and resolves the cruciform DNA. The protein is Crossover junction endodeoxyribonuclease RuvC of Synechococcus sp. (strain CC9311).